A 128-amino-acid polypeptide reads, in one-letter code: Azurin (128 aa).

One can recognise a Plastocyanin-like domain in the interval 1 to 128 (AECSVDIQGN…AMMKGTLTLK (128 aa)). The Cu cation site is built by His-46, Cys-112, His-117, and Met-121.

It is found in the periplasm. In terms of biological role, transfers electrons from cytochrome c551 to cytochrome oxidase. The protein is Azurin of Pseudomonas denitrificans.